Reading from the N-terminus, the 52-residue chain is ATP synthase protein 8 (52 aa).

Residues 6 to 26 (PINGFVILCSISLMLLTLLIN) form a helical membrane-spanning segment.

Belongs to the ATPase protein 8 family. As to quaternary structure, F-type ATPases have 2 components, CF(1) - the catalytic core - and CF(0) - the membrane proton channel.

It localises to the mitochondrion membrane. Mitochondrial membrane ATP synthase (F(1)F(0) ATP synthase or Complex V) produces ATP from ADP in the presence of a proton gradient across the membrane which is generated by electron transport complexes of the respiratory chain. F-type ATPases consist of two structural domains, F(1) - containing the extramembraneous catalytic core and F(0) - containing the membrane proton channel, linked together by a central stalk and a peripheral stalk. During catalysis, ATP synthesis in the catalytic domain of F(1) is coupled via a rotary mechanism of the central stalk subunits to proton translocation. Part of the complex F(0) domain. Minor subunit located with subunit a in the membrane. The chain is ATP synthase protein 8 (MT-ATP8) from Albinaria turrita (Door snail).